Reading from the N-terminus, the 126-residue chain is Fatty acid-binding protein, liver (126 aa).

A2 is modified (N-acetylalanine). Cholate-binding residues include K77, H99, and Q101.

Belongs to the calycin superfamily. Fatty-acid binding protein (FABP) family.

Its subcellular location is the cytoplasm. In terms of biological role, binds free fatty acids and their coenzyme A derivatives, bilirubin, and some other small molecules in the cytoplasm. May be involved in intracellular lipid transport. The sequence is that of Fatty acid-binding protein, liver (fabp1) from Aquarana catesbeiana (American bullfrog).